A 465-amino-acid polypeptide reads, in one-letter code: tRNA (guanine(37)-N(1))-methyltransferase (465 aa).

The N-terminal 20 residues, 1 to 20 (MDKNSQLRDMNLFRAPAARA), are a transit peptide targeting the mitochondrion. S-adenosyl-L-methionine is bound by residues H238 and 304 to 305 (DG). Positions 326–345 (AVIKPPRPPRKSAAPPPEPV) are disordered. N359 contributes to the S-adenosyl-L-methionine binding site.

This sequence belongs to the class I-like SAM-binding methyltransferase superfamily. TRM5/TYW2 family. In terms of assembly, monomer.

The protein resides in the mitochondrion matrix. It is found in the nucleus. The protein localises to the cytoplasm. The enzyme catalyses guanosine(37) in tRNA + S-adenosyl-L-methionine = N(1)-methylguanosine(37) in tRNA + S-adenosyl-L-homocysteine + H(+). Functionally, specifically methylates the N1 position of guanosine-37 in various cytoplasmic and mitochondrial tRNAs. Methylation is not dependent on the nature of the nucleoside 5' of the target nucleoside. This is the first step in the biosynthesis of wybutosine (yW), a modified base adjacent to the anticodon of tRNAs and required for accurate decoding. The protein is tRNA (guanine(37)-N(1))-methyltransferase of Fusarium vanettenii (strain ATCC MYA-4622 / CBS 123669 / FGSC 9596 / NRRL 45880 / 77-13-4) (Fusarium solani subsp. pisi).